The primary structure comprises 177 residues: Shikimate kinase (177 aa).

An ATP-binding site is contributed by 17-22 (GAGKST). A Mg(2+)-binding site is contributed by serine 21. Substrate contacts are provided by aspartate 39, arginine 63, and glycine 85. Arginine 123 provides a ligand contact to ATP. Arginine 142 contributes to the substrate binding site. Arginine 160 contacts ATP.

This sequence belongs to the shikimate kinase family. As to quaternary structure, monomer. The cofactor is Mg(2+).

It localises to the cytoplasm. It carries out the reaction shikimate + ATP = 3-phosphoshikimate + ADP + H(+). Its pathway is metabolic intermediate biosynthesis; chorismate biosynthesis; chorismate from D-erythrose 4-phosphate and phosphoenolpyruvate: step 5/7. Its function is as follows. Catalyzes the specific phosphorylation of the 3-hydroxyl group of shikimic acid using ATP as a cosubstrate. The polypeptide is Shikimate kinase (Halorhodospira halophila (strain DSM 244 / SL1) (Ectothiorhodospira halophila (strain DSM 244 / SL1))).